The primary structure comprises 220 residues: uncharacterized protein (220 aa).

A helical transmembrane segment spans residues 10 to 30 (FFIIGGVILSIGLILFFLLGF).

It localises to the membrane. This is an uncharacterized protein from Methanocaldococcus jannaschii (strain ATCC 43067 / DSM 2661 / JAL-1 / JCM 10045 / NBRC 100440) (Methanococcus jannaschii).